The sequence spans 224 residues: uncharacterized protein (224 aa).

The signal sequence occupies residues 1-23; that stretch reads MKKLLAAGIIGLLTVSIASPSFA. One can recognise a VWFA domain in the interval 31–224; that stretch reads NVAVLFDGSG…WEKEAQKFTE (194 aa).

It to B.subtilis YwmC.

This is an uncharacterized protein from Bacillus subtilis (strain 168).